We begin with the raw amino-acid sequence, 452 residues long: Golgi reassembly-stacking protein 2 (452 aa).

Gly-2 carries N-myristoyl glycine lipidation. PDZ GRASP-type domains follow at residues 15–105 (EGYH…FCSF) and 111–199 (NVWH…YGYL). Residues 15–215 (EGYHVLRVQE…PFEEGKKISL (201 aa)) are GRASP. Dimethylated arginine occurs at positions 30 and 47. The segment at 194–199 (IGYGYL) is important for membrane binding. Ser-214 is modified (phosphoserine). A phosphothreonine mark is found at Thr-222 and Thr-225. Positions 372 to 424 (PESSSAASSGELLSSLPPTSNAPSDPATTTAKADAASSLTVDVTPPTAKAPTT) are enriched in low complexity. The disordered stretch occupies residues 372-452 (PESSSAASSG…AVDANASESP (81 aa)). Ser-409 carries the post-translational modification Phosphoserine. Phosphothreonine is present on residues Thr-415 and Thr-433. Ser-436, Ser-441, Ser-449, and Ser-451 each carry phosphoserine.

It belongs to the GORASP family. Homodimer. Homooligomer. ER stress induces phosphorylation-dependent monomerization. Interacts with BLZF1/Golgin 45. Identified in a complex with RAB2 and GORASP2. Interacts with JAM2 and JAM3. Interacts with members of the p24 cargo receptors. Interacts with CNIH1 and the cytoplasmic domain of transmembrane TGFA, prior its transit in the trans-Golgi. Interacts with KCTD5. Interacts with TMED2 and TMED3. Interacts with SEC16A in response to ER stress. Interacts (via PDZ GRASP-type 1 domain) with core-glycosylated CFTR in response to ER stress. Myristoylated. Myristoylation is essential for the Golgi targeting. Post-translationally, palmitoylated. In terms of processing, phosphorylated in mitotic cells. ER stress-induced phosphorylation at Ser-441 induces monomerization and subsequent relocalization from Golgi to ER which is essential for mediating unconventional (ER/Golgi-independent) trafficking of CFTR to the cell membrane.

Its subcellular location is the golgi apparatus membrane. The protein resides in the endoplasmic reticulum membrane. It localises to the golgi apparatus. Its function is as follows. Key structural protein of the Golgi apparatus. The membrane cisternae of the Golgi apparatus adhere to each other to form stacks, which are aligned side by side to form the Golgi ribbon. Acting in concert with GORASP1/GRASP65, is required for the formation and maintenance of the Golgi ribbon, and may be dispensable for the formation of stacks. However, other studies suggest that GORASP2 plays a role in the assembly and membrane stacking of the Golgi cisternae, and in the process by which Golgi stacks reform after breakdown during mitosis and meiosis. May regulate the intracellular transport and presentation of a defined set of transmembrane proteins, such as transmembrane TGFA. Required for normal acrosome formation during spermiogenesis and normal male fertility, probably by promoting colocalization of JAM2 and JAM3 at contact sites between germ cells and Sertoli cells. Mediates ER stress-induced unconventional (ER/Golgi-independent) trafficking of core-glycosylated CFTR to cell membrane. The chain is Golgi reassembly-stacking protein 2 (GORASP2) from Homo sapiens (Human).